Consider the following 96-residue polypeptide: uncharacterized protein (96 aa).

Its subcellular location is the mitochondrion. This is an uncharacterized protein from Schizosaccharomyces pombe (strain 972 / ATCC 24843) (Fission yeast).